The chain runs to 334 residues: ABC transporter L-arabinose-binding periplasmic protein (334 aa).

Residues 1 to 30 (MNRTIRRHTLRALLAALCIAPLGMQGAARA) form the signal peptide.

The protein belongs to the bacterial solute-binding protein 2 family. As to quaternary structure, the complex is composed of two ATP-binding proteins (AraG), two transmembrane proteins (AraH) and a solute-binding protein (AraF).

Its subcellular location is the periplasm. Its function is as follows. Part of the ABC transporter complex AraFGH involved in L-arabinose import. Binds with high affinity to L-arabinose. The protein is ABC transporter L-arabinose-binding periplasmic protein (araF) of Azospirillum brasilense.